The chain runs to 261 residues: Phosphatidylglycerol--prolipoprotein diacylglyceryl transferase (261 aa).

A run of 4 helical transmembrane segments spans residues 12 to 32 (ISIR…VYLA), 41 to 61 (IIPD…IVGA), 87 to 107 (GIAG…LYFF), and 112 to 132 (LIHP…AQSI). R134 provides a ligand contact to a 1,2-diacyl-sn-glycero-3-phospho-(1'-sn-glycerol). The next 3 helical transmembrane spans lie at 170–190 (QPTF…IIVL), 200–220 (GEIA…IEGM), and 229–249 (GLRV…GIII).

Belongs to the Lgt family.

The protein resides in the cell membrane. It catalyses the reaction L-cysteinyl-[prolipoprotein] + a 1,2-diacyl-sn-glycero-3-phospho-(1'-sn-glycerol) = an S-1,2-diacyl-sn-glyceryl-L-cysteinyl-[prolipoprotein] + sn-glycerol 1-phosphate + H(+). Its pathway is protein modification; lipoprotein biosynthesis (diacylglyceryl transfer). In terms of biological role, catalyzes the transfer of the diacylglyceryl group from phosphatidylglycerol to the sulfhydryl group of the N-terminal cysteine of a prolipoprotein, the first step in the formation of mature lipoproteins. This Streptococcus sanguinis (strain SK36) protein is Phosphatidylglycerol--prolipoprotein diacylglyceryl transferase.